Reading from the N-terminus, the 382-residue chain is MATTSLASAFCSMKAVMLARDGRGMKPRSSDLQLRAGNAPTSLKMINGTKFSYTESLKRLPDWSMLFAVITTIFSAAEKQWTNLEWKPKPKLPQLLDDHFGLHGLVFRRTFAIRSYEVGPDRSTSILAVMNHMQEATLNHAKSVGILGDGFGTTLEMSKRDLMWVVRRTHVAVERYPTWGDTVEVECWIGASGNNGMRRDFLVRDCKTGEILTRCTSLSVLMNTRTRRLSTIPDEVRGEIGPAFIDNVAVKDDEIKKLQKLNDSTADYIQGGLTPRWNDLDVNQHVNNLKYVAWVFETVPDSIFESHHISSFTLEYRRECTRDSVLRSLTTVSGGSSEAGLVCDHLLQLEGGSEVLRARTEWRPKLTDSFRGISVIPAEPRV.

A chloroplast-targeting transit peptide spans 1-83; it reads MATTSLASAF…FSAAEKQWTN (83 aa). Residues Asn283, His285, and Cys320 contribute to the active site.

Belongs to the acyl-ACP thioesterase family. As to quaternary structure, forms homodimers. Expressed in developing cotyledons. Not detected in leaves.

It is found in the plastid. Its subcellular location is the chloroplast. It catalyses the reaction dodecanoyl-[ACP] + H2O = dodecanoate + holo-[ACP] + H(+). In terms of biological role, plays an essential role in chain termination during de novo fatty acid synthesis. High thioesterase activity for lauroyl-ACP versus other acyl-ACPs. The sequence is that of Dodecanoyl-[acyl-carrier-protein] hydrolase, chloroplastic from Umbellularia californica (California bay laurel).